Reading from the N-terminus, the 1152-residue chain is DNA-directed RNA polymerase subunit beta (1152 aa).

This sequence belongs to the RNA polymerase beta chain family. In terms of assembly, the RNAP catalytic core consists of 2 alpha, 1 beta, 1 beta' and 1 omega subunit. When a sigma factor is associated with the core the holoenzyme is formed, which can initiate transcription.

It catalyses the reaction RNA(n) + a ribonucleoside 5'-triphosphate = RNA(n+1) + diphosphate. Functionally, DNA-dependent RNA polymerase catalyzes the transcription of DNA into RNA using the four ribonucleoside triphosphates as substrates. The protein is DNA-directed RNA polymerase subunit beta of Deinococcus geothermalis (strain DSM 11300 / CIP 105573 / AG-3a).